A 626-amino-acid chain; its full sequence is PEX5-related protein (626 aa).

3 disordered regions span residues 1 to 20 (MYQG…LSSD), 118 to 167 (VSQT…SSLD), and 181 to 235 (KFHG…ASEL). Residues 181-198 (KFHGDRNTKGHPMAERKS) show a composition bias toward basic and acidic residues. Serine 205 carries the post-translational modification Phosphoserine. The segment covering 225–235 (SALNSESASEL) has biased composition (low complexity). A phosphoserine mark is found at serine 253, serine 257, and serine 261. TPR repeat units lie at residues 326 to 359 (WPGA…DPGD), 360 to 393 (AEAW…QPNN), and 395 to 427 (KALM…NPKY). A phosphoserine mark is found at serine 445 and serine 447. TPR repeat units lie at residues 474–507 (PDLQ…RPED), 509–541 (SLWN…QPGF), and 543–575 (RSRY…QRKS).

Belongs to the peroxisomal targeting signal receptor family. As to quaternary structure, interacts with RAB8B. Forms an obligate 4:4 complex with HCN2. May interact with the C-terminal PTS1-type tripeptide peroxisomal targeting signal (SKL-type); the relevance of such interaction is however unclear. Interacts with HCN3. Interacts with HCN4 with a 4:4 HCN4:PEX5L stoichiometry; reduces the effects of cAMP on the voltage-dependence and rate of activation of HCN4. In terms of tissue distribution, mainly expressed in brain. Also expressed in pancreas, testis and pituitary.

It is found in the cytoplasm. The protein localises to the membrane. In terms of biological role, accessory subunit of hyperpolarization-activated cyclic nucleotide-gated (HCN) channels, regulating their cell-surface expression and cyclic nucleotide dependence. The polypeptide is PEX5-related protein (PEX5L) (Homo sapiens (Human)).